Here is a 1073-residue protein sequence, read N- to C-terminus: Carbamoyl phosphate synthase large chain (1073 aa).

The segment at 2–403 is carboxyphosphate synthetic domain; it reads PKRTDIKSIL…SVQKALRGLE (402 aa). R129, R169, G175, G176, E208, L210, E215, G241, V242, H243, Q285, and E299 together coordinate ATP. Positions 133 to 328 constitute an ATP-grasp 1 domain; the sequence is DKAMKDIGLA…IAKIAAKLAV (196 aa). Positions 285, 299, and 301 each coordinate Mg(2+). Residues Q285, E299, and N301 each coordinate Mn(2+). Positions 404–553 are oligomerization domain; that stretch reads VGATGFDPKL…YSTYEEECEA (150 aa). Residues 554-935 form a carbamoyl phosphate synthetic domain region; it reads NPSSREKIMI…AFAKAQLGAS (382 aa). The 192-residue stretch at 678–869 folds into the ATP-grasp 2 domain; the sequence is QQMVQRLNLR…LAKVAARVMA (192 aa). Positions 714, 753, 755, 760, 785, 786, 787, 788, 828, and 840 each coordinate ATP. Mg(2+) contacts are provided by Q828, E840, and N842. The Mn(2+) site is built by Q828, E840, and N842. Positions 936-1073 constitute an MGS-like domain; sequence EILPTAGCAF…LQDLHAGIKA (138 aa). The segment at 936–1073 is allosteric domain; sequence EILPTAGCAF…LQDLHAGIKA (138 aa).

This sequence belongs to the CarB family. As to quaternary structure, composed of two chains; the small (or glutamine) chain promotes the hydrolysis of glutamine to ammonia, which is used by the large (or ammonia) chain to synthesize carbamoyl phosphate. Tetramer of heterodimers (alpha,beta)4. The cofactor is Mg(2+). Requires Mn(2+) as cofactor.

It catalyses the reaction hydrogencarbonate + L-glutamine + 2 ATP + H2O = carbamoyl phosphate + L-glutamate + 2 ADP + phosphate + 2 H(+). The enzyme catalyses hydrogencarbonate + NH4(+) + 2 ATP = carbamoyl phosphate + 2 ADP + phosphate + 2 H(+). It functions in the pathway amino-acid biosynthesis; L-arginine biosynthesis; carbamoyl phosphate from bicarbonate: step 1/1. Its pathway is pyrimidine metabolism; UMP biosynthesis via de novo pathway; (S)-dihydroorotate from bicarbonate: step 1/3. In terms of biological role, large subunit of the glutamine-dependent carbamoyl phosphate synthetase (CPSase). CPSase catalyzes the formation of carbamoyl phosphate from the ammonia moiety of glutamine, carbonate, and phosphate donated by ATP, constituting the first step of 2 biosynthetic pathways, one leading to arginine and/or urea and the other to pyrimidine nucleotides. The large subunit (synthetase) binds the substrates ammonia (free or transferred from glutamine from the small subunit), hydrogencarbonate and ATP and carries out an ATP-coupled ligase reaction, activating hydrogencarbonate by forming carboxy phosphate which reacts with ammonia to form carbamoyl phosphate. The polypeptide is Carbamoyl phosphate synthase large chain (Pseudomonas aeruginosa (strain ATCC 15692 / DSM 22644 / CIP 104116 / JCM 14847 / LMG 12228 / 1C / PRS 101 / PAO1)).